Reading from the N-terminus, the 208-residue chain is Ribosomal RNA large subunit methyltransferase E (208 aa).

Glycine 62, tryptophan 64, aspartate 82, aspartate 98, and aspartate 123 together coordinate S-adenosyl-L-methionine. Lysine 163 functions as the Proton acceptor in the catalytic mechanism.

It belongs to the class I-like SAM-binding methyltransferase superfamily. RNA methyltransferase RlmE family.

The protein localises to the cytoplasm. It carries out the reaction uridine(2552) in 23S rRNA + S-adenosyl-L-methionine = 2'-O-methyluridine(2552) in 23S rRNA + S-adenosyl-L-homocysteine + H(+). Specifically methylates the uridine in position 2552 of 23S rRNA at the 2'-O position of the ribose in the fully assembled 50S ribosomal subunit. This Actinobacillus succinogenes (strain ATCC 55618 / DSM 22257 / CCUG 43843 / 130Z) protein is Ribosomal RNA large subunit methyltransferase E.